The sequence spans 257 residues: 5'-nucleotidase SurE (257 aa).

4 residues coordinate a divalent metal cation: D8, D9, S40, and N92.

It belongs to the SurE nucleotidase family. A divalent metal cation serves as cofactor.

The protein resides in the cytoplasm. It catalyses the reaction a ribonucleoside 5'-phosphate + H2O = a ribonucleoside + phosphate. Nucleotidase that shows phosphatase activity on nucleoside 5'-monophosphates. In Rhizobium leguminosarum bv. trifolii (strain WSM2304), this protein is 5'-nucleotidase SurE.